The chain runs to 401 residues: Probable tRNA sulfurtransferase (401 aa).

Residues 60–165 (EEICSLLKNI…EEATFLTIRN (106 aa)) enclose the THUMP domain. ATP-binding positions include 183-184 (ML), 208-209 (HF), R265, G287, and Q296.

The protein belongs to the ThiI family.

The protein localises to the cytoplasm. It carries out the reaction [ThiI sulfur-carrier protein]-S-sulfanyl-L-cysteine + a uridine in tRNA + 2 reduced [2Fe-2S]-[ferredoxin] + ATP + H(+) = [ThiI sulfur-carrier protein]-L-cysteine + a 4-thiouridine in tRNA + 2 oxidized [2Fe-2S]-[ferredoxin] + AMP + diphosphate. The enzyme catalyses [ThiS sulfur-carrier protein]-C-terminal Gly-Gly-AMP + S-sulfanyl-L-cysteinyl-[cysteine desulfurase] + AH2 = [ThiS sulfur-carrier protein]-C-terminal-Gly-aminoethanethioate + L-cysteinyl-[cysteine desulfurase] + A + AMP + 2 H(+). It participates in cofactor biosynthesis; thiamine diphosphate biosynthesis. Catalyzes the ATP-dependent transfer of a sulfur to tRNA to produce 4-thiouridine in position 8 of tRNAs, which functions as a near-UV photosensor. Also catalyzes the transfer of sulfur to the sulfur carrier protein ThiS, forming ThiS-thiocarboxylate. This is a step in the synthesis of thiazole, in the thiamine biosynthesis pathway. The sulfur is donated as persulfide by IscS. The chain is Probable tRNA sulfurtransferase from Bacillus velezensis (strain DSM 23117 / BGSC 10A6 / LMG 26770 / FZB42) (Bacillus amyloliquefaciens subsp. plantarum).